The sequence spans 121 residues: Holin-like protein CidA 1 (121 aa).

4 helical membrane-spanning segments follow: residues serine 7–alanine 24, histidine 28–valine 50, leucine 62–arginine 81, and leucine 91–leucine 113.

This sequence belongs to the CidA/LrgA family. CidA subfamily.

It localises to the cell membrane. Its function is as follows. Increases the activity of extracellular murein hydrolases possibly by mediating their export via hole formation. Inhibited by the antiholin-like proteins LrgAB. In an unstressed cell, the LrgAB products probably inhibit the function of the CidA protein. When a cell is stressed by the addition of antibiotics or by other factors in the environment, CidA possibly oligomerizes within the bacterial cell membrane, creating lesions that disrupt the proton motive force, which in turn results in loss of cell viability. These lesions are also hypothesized to regulate the subsequent cell lysis by either allowing the murein hydrolases access to the cell wall substrate and/or regulating their activity by a possible change in the cell wall pH that results from loss of membrane potential. The sequence is that of Holin-like protein CidA 1 (cidA1) from Bacillus cereus (strain ATCC 14579 / DSM 31 / CCUG 7414 / JCM 2152 / NBRC 15305 / NCIMB 9373 / NCTC 2599 / NRRL B-3711).